A 62-amino-acid polypeptide reads, in one-letter code: MCCLPVFVILLLLIASAPSVDAQPKTKDDVPLAPLHDNAKSALQHLNQRCCQTFYWCCVQGK.

A signal peptide spans 1 to 22 (MCCLPVFVILLLLIASAPSVDA). Positions 23–49 (QPKTKDDVPLAPLHDNAKSALQHLNQR) are excised as a propeptide. The residue at position 60 (glutamine 60) is a Glutamine amide.

This sequence belongs to the conotoxin T superfamily. In terms of processing, contains 2 disulfide bonds that can be either 'C1-C3, C2-C4' or 'C1-C4, C2-C3', since these disulfide connectivities have been observed for conotoxins with cysteine framework V (for examples, see AC P0DQQ7 and AC P81755). Expressed by the venom duct.

The protein localises to the secreted. This is Conotoxin Tx5.1 from Conus textile (Cloth-of-gold cone).